The sequence spans 116 residues: Large ribosomal subunit protein uL18 (116 aa).

This sequence belongs to the universal ribosomal protein uL18 family. Part of the 50S ribosomal subunit; part of the 5S rRNA/L5/L18/L25 subcomplex. Contacts the 5S and 23S rRNAs.

In terms of biological role, this is one of the proteins that bind and probably mediate the attachment of the 5S RNA into the large ribosomal subunit, where it forms part of the central protuberance. The sequence is that of Large ribosomal subunit protein uL18 from Shewanella amazonensis (strain ATCC BAA-1098 / SB2B).